The sequence spans 222 residues: Large ribosomal subunit protein uL1 (222 aa).

It belongs to the universal ribosomal protein uL1 family. In terms of assembly, part of the 50S ribosomal subunit.

Binds directly to 23S rRNA. Probably involved in E site tRNA release. Functionally, protein L1 is also a translational repressor protein, it controls the translation of its operon by binding to its mRNA. In Pyrobaculum arsenaticum (strain DSM 13514 / JCM 11321 / PZ6), this protein is Large ribosomal subunit protein uL1.